Reading from the N-terminus, the 238-residue chain is Dolichyldiphosphatase 1 (238 aa).

4 helical membrane passes run 33 to 53 (LAYL…LIIF), 100 to 120 (PSSH…FLYL), 130 to 150 (FLDL…AFLV), and 162 to 182 (WSQV…WFAF).

The protein belongs to the dolichyldiphosphatase family.

The protein resides in the endoplasmic reticulum membrane. It carries out the reaction a di-trans,poly-cis-dolichyl diphosphate + H2O = a di-trans,poly-cis-dolichyl phosphate + phosphate + H(+). It functions in the pathway protein modification; protein glycosylation. Its function is as follows. Required for efficient N-glycosylation. Necessary for maintaining optimal levels of dolichol-linked oligosaccharides. Hydrolyzes dolichyl pyrophosphate at a very high rate and dolichyl monophosphate at a much lower rate. Does not act on phosphatidate. The polypeptide is Dolichyldiphosphatase 1 (DOLPP1) (Rhinolophus ferrumequinum (Greater horseshoe bat)).